The sequence spans 350 residues: Proton-activated chloride channel (350 aa).

Residues 1–51 (MEAIRKELSRSYQELNDETDPIARDPEGAQEEEQEEAASAVVPDRDSDRSN) are disordered. Residues 1–63 (MEAIRKELSR…VHFSRTCLKN (63 aa)) are Cytoplasmic-facing. The helical transmembrane segment at 64–84 (VFSVLLIFVYLLLMGVAVFLV) threads the bilayer. The Extracellular portion of the chain corresponds to 85–297 (YQTITDFRDK…KDPYIQEIQD (213 aa)). Residues 298–318 (IITANPWSMIALLCSVFLVLF) traverse the membrane as a helical segment. The Cytoplasmic segment spans residues 319–350 (KAADFAKLSVKWMIKVRRRHLKKRTRELNHIS).

The protein belongs to the proton-activated chloride channel family.

The protein localises to the cell membrane. The enzyme catalyses chloride(in) = chloride(out). In terms of biological role, chloride channel gated by pH that facilitates the entry of chloride ions into cells upon exposure to extracellular acidic pH. In Xenopus laevis (African clawed frog), this protein is Proton-activated chloride channel.